We begin with the raw amino-acid sequence, 328 residues long: Cell division protein ZipA (328 aa).

Topologically, residues 1–6 (MMQDLR) are periplasmic. A helical membrane pass occupies residues 7–27 (LILIVVGAIAIIALLLHGLWT). Residues 28–328 (SRKERSSLFR…REVLDANTIA (301 aa)) lie on the Cytoplasmic side of the membrane. Basic and acidic residues predominate over residues 61–72 (GEVRVRTSHPQE). The tract at residues 61 to 183 (GEVRVRTSHP…EPVAPAPEAK (123 aa)) is disordered. Polar residues-rich tracts occupy residues 95–104 (KSAQVKTASR) and 164–174 (APQQHVESQQE).

It belongs to the ZipA family. As to quaternary structure, interacts with FtsZ via their C-terminal domains.

The protein resides in the cell inner membrane. Essential cell division protein that stabilizes the FtsZ protofilaments by cross-linking them and that serves as a cytoplasmic membrane anchor for the Z ring. Also required for the recruitment to the septal ring of downstream cell division proteins. This is Cell division protein ZipA from Yersinia pestis bv. Antiqua (strain Antiqua).